Reading from the N-terminus, the 206-residue chain is 3-demethoxyubiquinol 3-hydroxylase (206 aa).

Residues Glu55, Glu85, His88, Glu137, Glu169, and His172 each contribute to the Fe cation site.

The protein belongs to the COQ7 family. Fe cation is required as a cofactor.

Its subcellular location is the cell membrane. The catalysed reaction is a 5-methoxy-2-methyl-3-(all-trans-polyprenyl)benzene-1,4-diol + AH2 + O2 = a 3-demethylubiquinol + A + H2O. It functions in the pathway cofactor biosynthesis; ubiquinone biosynthesis. Catalyzes the hydroxylation of 2-nonaprenyl-3-methyl-6-methoxy-1,4-benzoquinol during ubiquinone biosynthesis. The chain is 3-demethoxyubiquinol 3-hydroxylase from Aromatoleum aromaticum (strain DSM 19018 / LMG 30748 / EbN1) (Azoarcus sp. (strain EbN1)).